The chain runs to 603 residues: DNA mismatch repair protein MutL (603 aa).

This sequence belongs to the DNA mismatch repair MutL/HexB family.

Its function is as follows. This protein is involved in the repair of mismatches in DNA. It is required for dam-dependent methyl-directed DNA mismatch repair. May act as a 'molecular matchmaker', a protein that promotes the formation of a stable complex between two or more DNA-binding proteins in an ATP-dependent manner without itself being part of a final effector complex. The protein is DNA mismatch repair protein MutL of Listeria monocytogenes serotype 4a (strain HCC23).